A 461-amino-acid polypeptide reads, in one-letter code: Fumarate hydratase class II (461 aa).

Residues 97–99 (SGT), 127–130 (HPND), 137–139 (SSN), and T185 each bind substrate. The active-site Proton donor/acceptor is H186. Residue S316 is part of the active site. Residues S317 and 322-324 (KVN) each bind substrate.

It belongs to the class-II fumarase/aspartase family. Fumarase subfamily. As to quaternary structure, homotetramer.

It localises to the cytoplasm. It catalyses the reaction (S)-malate = fumarate + H2O. It functions in the pathway carbohydrate metabolism; tricarboxylic acid cycle; (S)-malate from fumarate: step 1/1. Its function is as follows. Involved in the TCA cycle. Catalyzes the stereospecific interconversion of fumarate to L-malate. This is Fumarate hydratase class II from Staphylococcus epidermidis (strain ATCC 35984 / DSM 28319 / BCRC 17069 / CCUG 31568 / BM 3577 / RP62A).